The primary structure comprises 427 residues: Gamma-glutamyl phosphate reductase (427 aa).

This sequence belongs to the gamma-glutamyl phosphate reductase family.

The protein resides in the cytoplasm. The enzyme catalyses L-glutamate 5-semialdehyde + phosphate + NADP(+) = L-glutamyl 5-phosphate + NADPH + H(+). The protein operates within amino-acid biosynthesis; L-proline biosynthesis; L-glutamate 5-semialdehyde from L-glutamate: step 2/2. Catalyzes the NADPH-dependent reduction of L-glutamate 5-phosphate into L-glutamate 5-semialdehyde and phosphate. The product spontaneously undergoes cyclization to form 1-pyrroline-5-carboxylate. This is Gamma-glutamyl phosphate reductase from Rhizobium etli (strain CIAT 652).